A 183-amino-acid polypeptide reads, in one-letter code: Ribosome-recycling factor (183 aa).

It belongs to the RRF family.

It is found in the cytoplasm. Its function is as follows. Responsible for the release of ribosomes from messenger RNA at the termination of protein biosynthesis. May increase the efficiency of translation by recycling ribosomes from one round of translation to another. This chain is Ribosome-recycling factor, found in Christiangramia forsetii (strain DSM 17595 / CGMCC 1.15422 / KT0803) (Gramella forsetii).